The primary structure comprises 250 residues: Adenosine 5'-phosphosulfate reductase (250 aa).

Positions 119, 120, 202, and 205 each coordinate [4Fe-4S] cluster. C230 serves as the catalytic Nucleophile; cysteine thiosulfonate intermediate.

It belongs to the PAPS reductase family. CysH subfamily. Requires [4Fe-4S] cluster as cofactor.

The protein resides in the cytoplasm. The catalysed reaction is [thioredoxin]-disulfide + sulfite + AMP + 2 H(+) = adenosine 5'-phosphosulfate + [thioredoxin]-dithiol. The protein operates within sulfur metabolism; hydrogen sulfide biosynthesis; sulfite from sulfate. Its function is as follows. Catalyzes the formation of sulfite from adenosine 5'-phosphosulfate (APS) using thioredoxin as an electron donor. The polypeptide is Adenosine 5'-phosphosulfate reductase (Burkholderia cepacia (Pseudomonas cepacia)).